A 456-amino-acid polypeptide reads, in one-letter code: Bifunctional protein GlmU (456 aa).

The pyrophosphorylase stretch occupies residues 1-228 (MPQNTLNIVI…SHLAAGVNNK (228 aa)). Residues 11–14 (LAAG), Lys-25, Gln-75, 80–81 (GT), 102–104 (YGD), Gly-138, Glu-153, Asn-168, and Asn-226 each bind UDP-N-acetyl-alpha-D-glucosamine. Asp-104 lines the Mg(2+) pocket. Asn-226 provides a ligand contact to Mg(2+). The segment at 229-249 (LQLAELERIFQTGQAQELLKA) is linker. An N-acetyltransferase region spans residues 250-456 (GVTLHDPARF…GWVRPEKDKQ (207 aa)). Residues Arg-332 and Lys-350 each contribute to the UDP-N-acetyl-alpha-D-glucosamine site. His-362 functions as the Proton acceptor in the catalytic mechanism. UDP-N-acetyl-alpha-D-glucosamine contacts are provided by Tyr-365 and Asn-376. Acetyl-CoA-binding positions include Ala-379, 385–386 (NY), Ser-404, Ala-422, and Arg-439.

This sequence in the N-terminal section; belongs to the N-acetylglucosamine-1-phosphate uridyltransferase family. In the C-terminal section; belongs to the transferase hexapeptide repeat family. Homotrimer. Mg(2+) serves as cofactor.

The protein localises to the cytoplasm. The catalysed reaction is alpha-D-glucosamine 1-phosphate + acetyl-CoA = N-acetyl-alpha-D-glucosamine 1-phosphate + CoA + H(+). It carries out the reaction N-acetyl-alpha-D-glucosamine 1-phosphate + UTP + H(+) = UDP-N-acetyl-alpha-D-glucosamine + diphosphate. Its pathway is nucleotide-sugar biosynthesis; UDP-N-acetyl-alpha-D-glucosamine biosynthesis; N-acetyl-alpha-D-glucosamine 1-phosphate from alpha-D-glucosamine 6-phosphate (route II): step 2/2. It participates in nucleotide-sugar biosynthesis; UDP-N-acetyl-alpha-D-glucosamine biosynthesis; UDP-N-acetyl-alpha-D-glucosamine from N-acetyl-alpha-D-glucosamine 1-phosphate: step 1/1. It functions in the pathway bacterial outer membrane biogenesis; LPS lipid A biosynthesis. Functionally, catalyzes the last two sequential reactions in the de novo biosynthetic pathway for UDP-N-acetylglucosamine (UDP-GlcNAc). The C-terminal domain catalyzes the transfer of acetyl group from acetyl coenzyme A to glucosamine-1-phosphate (GlcN-1-P) to produce N-acetylglucosamine-1-phosphate (GlcNAc-1-P), which is converted into UDP-GlcNAc by the transfer of uridine 5-monophosphate (from uridine 5-triphosphate), a reaction catalyzed by the N-terminal domain. The sequence is that of Bifunctional protein GlmU from Neisseria meningitidis serogroup C (strain 053442).